Here is a 233-residue protein sequence, read N- to C-terminus: Segregation and condensation protein A (233 aa).

It belongs to the ScpA family. As to quaternary structure, component of a cohesin-like complex composed of ScpA, ScpB and the Smc homodimer, in which ScpA and ScpB bind to the head domain of Smc. The presence of the three proteins is required for the association of the complex with DNA.

It localises to the cytoplasm. Its function is as follows. Participates in chromosomal partition during cell division. May act via the formation of a condensin-like complex containing Smc and ScpB that pull DNA away from mid-cell into both cell halves. The sequence is that of Segregation and condensation protein A from Streptococcus pyogenes serotype M1.